We begin with the raw amino-acid sequence, 146 residues long: Hemoglobin subunit beta (146 aa).

Val1 carries the N-acetylvaline modification. One can recognise a Globin domain in the interval 2–146 (HLSAEEKAAV…VANALAHKYH (145 aa)). Position 12 is a phosphothreonine (Thr12). Ser44 bears the Phosphoserine mark. Position 59 is an N6-acetyllysine (Lys59). His63 is a heme b binding site. Position 82 is an N6-acetyllysine (Lys82). Heme b is bound at residue His92. Cys93 carries the S-nitrosocysteine modification. N6-acetyllysine is present on Lys144.

This sequence belongs to the globin family. Heterotetramer of two alpha chains and two beta chains. As to expression, red blood cells.

Involved in oxygen transport from the lung to the various peripheral tissues. This chain is Hemoglobin subunit beta (HBB), found in Ctenodactylus gundi (Northern gundi).